The following is an 89-amino-acid chain: Large ribosomal subunit protein eL34 (89 aa).

The disordered stretch occupies residues 1–22 (MPAPRYKSGSSKKVYRKAPGNS).

The protein belongs to the eukaryotic ribosomal protein eL34 family.

This is Large ribosomal subunit protein eL34 from Methanococcus maripaludis (strain DSM 14266 / JCM 13030 / NBRC 101832 / S2 / LL).